We begin with the raw amino-acid sequence, 348 residues long: MKIIQEIPERNIIKLIPENLDDLWHLSNIIQPYNAIYAVTERRTEDKGDKLRADRGTKRRVFLGIKAEKINFHEDFNRLRVSGKIIHAPDDIPIGSYHTIDIEPLLQVSVQKNWKKWDLARLKDAEDSSKKPKVVVVIMDDSEADIFLVREFGIKELASIKSGISKKLDYKQNEQAKFSYYSDIINSISEYEGKILFAGPGFGKNNIQNYISEKHKDLAPNVVIESANHTGKSGLSEILKSGIIDKIYGEARISKETQIIEKLLEEISKKGLAAYGIESVSNAMNYSAIDTLLLTDEYLRRNRRTIEELMNNVENINGNILIISTEHDAGKQLKALGGISALLRFPIE.

Belongs to the eukaryotic release factor 1 family. Pelota subfamily. Monomer. It depends on a divalent metal cation as a cofactor.

The protein resides in the cytoplasm. Its function is as follows. May function in recognizing stalled ribosomes, interact with stem-loop structures in stalled mRNA molecules, and effect endonucleolytic cleavage of the mRNA. May play a role in the release non-functional ribosomes and degradation of damaged mRNAs. Has endoribonuclease activity. The chain is Protein pelota homolog from Methanococcus maripaludis (strain C6 / ATCC BAA-1332).